The primary structure comprises 173 residues: MVQDAFSKVVSQADARGEYLSDGQLDALINLVKEGNKRVDVVNRISSNASSIVRNAARSLFAEQPQLIAPGGNAYTSRRAAACVRDLEIILRYVTYAIFAGDASVLDDRALNGLRETYLALGTPGASVAVGIQKLKESSIAIANDPNGITRGDCSSLIAEVSGYFDRAAAAVA.

Asparagine 73 bears the N4-methylasparagine mark. (2R,3E)-phycocyanobilin-binding residues include cysteine 83 and cysteine 154.

It belongs to the phycobiliprotein family. As to quaternary structure, heterodimer of an alpha and a beta subunit, which further assembles into trimers and the trimers into hexamers. Post-translationally, contains two covalently linked bilin chromophores.

It localises to the cellular thylakoid membrane. Functionally, light-harvesting photosynthetic bile pigment-protein from the phycobiliprotein complex (phycobilisome, PBS). Phycocyanin is the major phycobiliprotein in the PBS rod. The protein is C-phycocyanin-3 beta subunit (cpcB3) of Microchaete diplosiphon (Fremyella diplosiphon).